An 86-amino-acid polypeptide reads, in one-letter code: Small ribosomal subunit protein bS20 (86 aa).

Residues 1–27 (MANSKSAKKRATQAERRRQHNASRRSM) show a composition bias toward basic residues. Residues 1 to 28 (MANSKSAKKRATQAERRRQHNASRRSMM) form a disordered region.

This sequence belongs to the bacterial ribosomal protein bS20 family.

Functionally, binds directly to 16S ribosomal RNA. This is Small ribosomal subunit protein bS20 from Aliivibrio fischeri (strain MJ11) (Vibrio fischeri).